A 287-amino-acid polypeptide reads, in one-letter code: MEQLLEKALILQEALPFIRDFYGKVFVVKYGGAAMEEEELKHSFAKDIALLRYVGIKVVLVHGGGKDITNMLNKLNIQTEFINGIRKTDKESLDVARMVLIGKLNKDIVSMLNKEMSNMHGAIGLSGIDANLLICTKYYQDGEDIGYVGKVKTVNTKLIRELIQMDYTPVIAPIGIDPESNQMYNVNADMAATEIACELGAEKLIFLTDTDGILDKSGKTISSIHKNQYKELIEDGTITKGMIPKINSAIDAILRGVRKVHIINGKIKHSILIEVFTKEGIGTEISL.

Substrate is bound by residues 64-65 (GG), Arg86, and Asn185.

Belongs to the acetylglutamate kinase family. ArgB subfamily.

It localises to the cytoplasm. It catalyses the reaction N-acetyl-L-glutamate + ATP = N-acetyl-L-glutamyl 5-phosphate + ADP. It functions in the pathway amino-acid biosynthesis; L-arginine biosynthesis; N(2)-acetyl-L-ornithine from L-glutamate: step 2/4. Functionally, catalyzes the ATP-dependent phosphorylation of N-acetyl-L-glutamate. In Hydrogenobaculum sp. (strain Y04AAS1), this protein is Acetylglutamate kinase.